Reading from the N-terminus, the 634-residue chain is NRPS-independent siderophore synthetase rfs (634 aa).

Functionally, NRPS-independent siderophore synthetase that catalyzes the rhizoferrin biosynthesis from citrate and diaminobutane via an ATP-dependent condensation of citrate with diaminobutane followed by the addition of a second citrate to the monocitryl-diaminobutane intermediate. Can also use as substrates the citrate and diaminobutane homologs oxaloacetic acid, diaminopropane, diaminobutane, diaminopentane, tricarballylic acid, hydroxylamine and ornithine. Forms only a mono-substituted intermediate with oxaloacetic acid and diaminopentane whereas both mono-citryl intermediates and full rhizoferrin derivatives were detected when diaminopropane, and ornithine were used as substrates. Tricarballylic acid only forms a rhizoferrin derivative, but no mono-substituted intermediate. The protein is NRPS-independent siderophore synthetase rfs of Rhizopus delemar (strain RA 99-880 / ATCC MYA-4621 / FGSC 9543 / NRRL 43880) (Mucormycosis agent).